The primary structure comprises 372 residues: Lipid-A-disaccharide synthase (372 aa).

The protein belongs to the LpxB family.

It carries out the reaction a lipid X + a UDP-2-N,3-O-bis[(3R)-3-hydroxyacyl]-alpha-D-glucosamine = a lipid A disaccharide + UDP + H(+). It functions in the pathway bacterial outer membrane biogenesis; LPS lipid A biosynthesis. Condensation of UDP-2,3-diacylglucosamine and 2,3-diacylglucosamine-1-phosphate to form lipid A disaccharide, a precursor of lipid A, a phosphorylated glycolipid that anchors the lipopolysaccharide to the outer membrane of the cell. The protein is Lipid-A-disaccharide synthase of Thiobacillus denitrificans (strain ATCC 25259 / T1).